The following is a 267-amino-acid chain: Probable ribosomal RNA small subunit methyltransferase A (267 aa).

5 residues coordinate S-adenosyl-L-methionine: leucine 12, glycine 37, glutamate 58, aspartate 83, and asparagine 100.

The protein belongs to the class I-like SAM-binding methyltransferase superfamily. rRNA adenine N(6)-methyltransferase family. RsmA subfamily.

It is found in the cytoplasm. Its function is as follows. Specifically dimethylates two adjacent adenosines in the loop of a conserved hairpin near the 3'-end of 16S rRNA in the 30S particle. May play a critical role in biogenesis of 30S subunits. The sequence is that of Probable ribosomal RNA small subunit methyltransferase A from Methanococcus vannielii (strain ATCC 35089 / DSM 1224 / JCM 13029 / OCM 148 / SB).